Consider the following 290-residue polypeptide: Acetyl-coenzyme A carboxylase carboxyl transferase subunit beta (290 aa).

The CoA carboxyltransferase N-terminal domain maps to 27–290; the sequence is LWHKCPSCEA…FTHSPSPVSA (264 aa). Zn(2+) contacts are provided by cysteine 31, cysteine 34, cysteine 50, and cysteine 53. The C4-type zinc finger occupies 31–53; that stretch reads CPSCEAVLYRPELEKTLDVCPKC.

This sequence belongs to the AccD/PCCB family. As to quaternary structure, acetyl-CoA carboxylase is a heterohexamer composed of biotin carboxyl carrier protein (AccB), biotin carboxylase (AccC) and two subunits each of ACCase subunit alpha (AccA) and ACCase subunit beta (AccD). It depends on Zn(2+) as a cofactor.

The protein localises to the cytoplasm. The catalysed reaction is N(6)-carboxybiotinyl-L-lysyl-[protein] + acetyl-CoA = N(6)-biotinyl-L-lysyl-[protein] + malonyl-CoA. Its pathway is lipid metabolism; malonyl-CoA biosynthesis; malonyl-CoA from acetyl-CoA: step 1/1. In terms of biological role, component of the acetyl coenzyme A carboxylase (ACC) complex. Biotin carboxylase (BC) catalyzes the carboxylation of biotin on its carrier protein (BCCP) and then the CO(2) group is transferred by the transcarboxylase to acetyl-CoA to form malonyl-CoA. This Pseudomonas paraeruginosa (strain DSM 24068 / PA7) (Pseudomonas aeruginosa (strain PA7)) protein is Acetyl-coenzyme A carboxylase carboxyl transferase subunit beta.